The sequence spans 155 residues: Small ribosomal subunit protein uS13 (155 aa).

Residues 135–145 show a composition bias toward basic residues; sequence QHTKTTGRRGR. Residues 135–155 form a disordered region; sequence QHTKTTGRRGRTVGVSRTKGA. A compositionally biased stretch (low complexity) spans 146–155; that stretch reads TVGVSRTKGA.

This sequence belongs to the universal ribosomal protein uS13 family. As to quaternary structure, component of the small ribosomal subunit.

It localises to the cytoplasm. Its function is as follows. Component of the small ribosomal subunit. The ribosome is a large ribonucleoprotein complex responsible for the synthesis of proteins in the cell. The sequence is that of Small ribosomal subunit protein uS13 (RPS18) from Entamoeba histolytica (strain ATCC 30459 / HM-1:IMSS / ABRM).